We begin with the raw amino-acid sequence, 89 residues long: Small ribosomal subunit protein uS14A (89 aa).

This sequence belongs to the universal ribosomal protein uS14 family. In terms of assembly, part of the 30S ribosomal subunit. Contacts proteins S3 and S10.

Binds 16S rRNA, required for the assembly of 30S particles and may also be responsible for determining the conformation of the 16S rRNA at the A site. In Levilactobacillus brevis (strain ATCC 367 / BCRC 12310 / CIP 105137 / JCM 1170 / LMG 11437 / NCIMB 947 / NCTC 947) (Lactobacillus brevis), this protein is Small ribosomal subunit protein uS14A.